A 63-amino-acid chain; its full sequence is Small ribosomal subunit protein eS27 (63 aa).

Cys-18, Cys-21, Cys-37, and Cys-40 together coordinate Zn(2+). Residues 18–40 form a C4-type zinc finger; the sequence is CIDCGNEQIVFSHPATKVRCLIC.

This sequence belongs to the eukaryotic ribosomal protein eS27 family. As to quaternary structure, part of the 30S ribosomal subunit. Zn(2+) is required as a cofactor.

The sequence is that of Small ribosomal subunit protein eS27 from Pyrococcus furiosus (strain ATCC 43587 / DSM 3638 / JCM 8422 / Vc1).